The chain runs to 59 residues: KappaPI-actitoxin-Avd3d (59 aa).

A BPTI/Kunitz inhibitor domain is found at 5 to 55; sequence CELPKVVGRCRARFPRYYYNLSSRRCEKFIYGGCGGNANNFHTLEECEKVC. Cystine bridges form between cysteine 5-cysteine 55, cysteine 14-cysteine 38, and cysteine 30-cysteine 51.

This sequence belongs to the venom Kunitz-type family. Sea anemone type 2 potassium channel toxin subfamily.

Its subcellular location is the secreted. It localises to the nematocyst. Its function is as follows. Dual-function toxin that inhibits both the serine protease trypsin (Kd&lt;30 nM) and voltage-gated potassium channels Kv1.2/KCNA2 (IC(50)=1300 nM). This Anemonia sulcata (Mediterranean snakelocks sea anemone) protein is KappaPI-actitoxin-Avd3d.